We begin with the raw amino-acid sequence, 213 residues long: uncharacterized protein (213 aa).

S-adenosyl-L-methionine is bound by residues Gly-53, Glu-74, and Asp-96.

Belongs to the methyltransferase superfamily. YrrT family.

Its function is as follows. Could be a S-adenosyl-L-methionine-dependent methyltransferase. This is an uncharacterized protein from Bacillus pumilus (strain SAFR-032).